A 166-amino-acid polypeptide reads, in one-letter code: UPF0179 protein Tneu_1978 (166 aa).

Residues 140–166 form a disordered region; sequence PPSPSKSGGATASRDPSRAPPSRPLSK. Over residues 157 to 166 the composition is skewed to pro residues; it reads RAPPSRPLSK.

Belongs to the UPF0179 family.

The chain is UPF0179 protein Tneu_1978 from Pyrobaculum neutrophilum (strain DSM 2338 / JCM 9278 / NBRC 100436 / V24Sta) (Thermoproteus neutrophilus).